A 107-amino-acid polypeptide reads, in one-letter code: U1-lycotoxin-Ls1b (107 aa).

The signal sequence occupies residues 1 to 20 (MMKVLVVVALLVTLISYSSS). The propeptide occupies 21 to 41 (EGIDDLEADELLSLMADEQTR). 4 cysteine pairs are disulfide-bonded: Cys-44–Cys-59, Cys-51–Cys-68, Cys-58–Cys-86, and Cys-70–Cys-84.

It belongs to the neurotoxin 19 (CSTX) family. 04 (U1-Lctx) subfamily. In terms of tissue distribution, expressed by the venom gland.

The protein resides in the secreted. The polypeptide is U1-lycotoxin-Ls1b (Lycosa singoriensis (Wolf spider)).